Consider the following 286-residue polypeptide: 4-hydroxy-3-methylbut-2-enyl diphosphate reductase (286 aa).

Cysteine 12 lines the [4Fe-4S] cluster pocket. Positions 47 and 80 each coordinate (2E)-4-hydroxy-3-methylbut-2-enyl diphosphate. Dimethylallyl diphosphate contacts are provided by histidine 47 and histidine 80. The isopentenyl diphosphate site is built by histidine 47 and histidine 80. Cysteine 102 is a [4Fe-4S] cluster binding site. Histidine 130 lines the (2E)-4-hydroxy-3-methylbut-2-enyl diphosphate pocket. A dimethylallyl diphosphate-binding site is contributed by histidine 130. Histidine 130 serves as a coordination point for isopentenyl diphosphate. The active-site Proton donor is glutamate 132. Residue threonine 170 participates in (2E)-4-hydroxy-3-methylbut-2-enyl diphosphate binding. Residue cysteine 198 participates in [4Fe-4S] cluster binding. Residues serine 226, asparagine 228, and serine 270 each contribute to the (2E)-4-hydroxy-3-methylbut-2-enyl diphosphate site. Residues serine 226, asparagine 228, and serine 270 each coordinate dimethylallyl diphosphate. The isopentenyl diphosphate site is built by serine 226, asparagine 228, and serine 270.

The protein belongs to the IspH family. The cofactor is [4Fe-4S] cluster.

It carries out the reaction isopentenyl diphosphate + 2 oxidized [2Fe-2S]-[ferredoxin] + H2O = (2E)-4-hydroxy-3-methylbut-2-enyl diphosphate + 2 reduced [2Fe-2S]-[ferredoxin] + 2 H(+). The enzyme catalyses dimethylallyl diphosphate + 2 oxidized [2Fe-2S]-[ferredoxin] + H2O = (2E)-4-hydroxy-3-methylbut-2-enyl diphosphate + 2 reduced [2Fe-2S]-[ferredoxin] + 2 H(+). It functions in the pathway isoprenoid biosynthesis; dimethylallyl diphosphate biosynthesis; dimethylallyl diphosphate from (2E)-4-hydroxy-3-methylbutenyl diphosphate: step 1/1. It participates in isoprenoid biosynthesis; isopentenyl diphosphate biosynthesis via DXP pathway; isopentenyl diphosphate from 1-deoxy-D-xylulose 5-phosphate: step 6/6. In terms of biological role, catalyzes the conversion of 1-hydroxy-2-methyl-2-(E)-butenyl 4-diphosphate (HMBPP) into a mixture of isopentenyl diphosphate (IPP) and dimethylallyl diphosphate (DMAPP). Acts in the terminal step of the DOXP/MEP pathway for isoprenoid precursor biosynthesis. The chain is 4-hydroxy-3-methylbut-2-enyl diphosphate reductase from Desulfovibrio desulfuricans (strain ATCC 27774 / DSM 6949 / MB).